The chain runs to 481 residues: Chromosomal replication initiator protein DnaA (481 aa).

A domain I, interacts with DnaA modulators region spans residues 1-74 (MSQDLWSFCL…ELGAEFHGAP (74 aa)). Residues 74–144 (PIEIELVLPA…TASDLAYEKT (71 aa)) are domain II. Positions 101–123 (AGPAPAPTPSQAPAATAAAPAVV) are disordered. Over residues 111–123 (QAPAATAAAPAVV) the composition is skewed to low complexity. Residues 145–361 (RLNADFTFDT…GALNKVVAFA (217 aa)) are domain III, AAA+ region. 4 residues coordinate ATP: glycine 189, glycine 191, lysine 192, and threonine 193. The tract at residues 362-481 (RFHGRGITLE…VHVLTQVLRG (120 aa)) is domain IV, binds dsDNA.

This sequence belongs to the DnaA family. Oligomerizes as a right-handed, spiral filament on DNA at oriC.

The protein resides in the cytoplasm. In terms of biological role, plays an essential role in the initiation and regulation of chromosomal replication. ATP-DnaA binds to the origin of replication (oriC) to initiate formation of the DNA replication initiation complex once per cell cycle. Binds the DnaA box (a 9 base pair repeat at the origin) and separates the double-stranded (ds)DNA. Forms a right-handed helical filament on oriC DNA; dsDNA binds to the exterior of the filament while single-stranded (ss)DNA is stabiized in the filament's interior. The ATP-DnaA-oriC complex binds and stabilizes one strand of the AT-rich DNA unwinding element (DUE), permitting loading of DNA polymerase. After initiation quickly degrades to an ADP-DnaA complex that is not apt for DNA replication. Binds acidic phospholipids. This chain is Chromosomal replication initiator protein DnaA, found in Aromatoleum aromaticum (strain DSM 19018 / LMG 30748 / EbN1) (Azoarcus sp. (strain EbN1)).